A 421-amino-acid polypeptide reads, in one-letter code: Membrane-associated protein UidC (421 aa).

The N-terminal stretch at 1 to 23 (MRKIVAMAVICLTAASGLTSAYA) is a signal peptide.

The protein belongs to the outer membrane porin (Opr) (TC 1.B.25) family.

The protein localises to the cell outer membrane. Functionally, enhances the activity of the UidB (GusB) glucuronide transporter, on its own however it has no transport activity. Glucuronide transport does not occur in strain K12 due to a variant at position 100 of the UidB (GusB, AC P0CE44, AC P0CE45) protein. This is Membrane-associated protein UidC (uidC) from Escherichia coli (strain K12).